We begin with the raw amino-acid sequence, 92 residues long: Small ribosomal subunit protein uS19 (92 aa).

It belongs to the universal ribosomal protein uS19 family.

Its function is as follows. Protein S19 forms a complex with S13 that binds strongly to the 16S ribosomal RNA. This chain is Small ribosomal subunit protein uS19, found in Rickettsia canadensis (strain McKiel).